We begin with the raw amino-acid sequence, 737 residues long: Amyloid-beta A4 protein (737 aa).

Residues 1 to 18 form the signal peptide; that stretch reads MGETTAFVLLLVATLTRS. The Extracellular segment spans residues 19–668; the sequence is SEIPADDTVG…ADDVGSNKGA (650 aa). The interval 29–124 is GFLD subdomain; the sequence is LLTEPQVAMF…PYRCLVGEFV (96 aa). One can recognise an E1 domain in the interval 29 to 190; sequence LLTEPQVAMF…RGVKFVCCPA (162 aa). 6 disulfide bridges follow: cysteine 39-cysteine 63, cysteine 74-cysteine 118, cysteine 99-cysteine 106, cysteine 134-cysteine 188, cysteine 145-cysteine 175, and cysteine 159-cysteine 187. The segment at 132-190 is cuBD subdomain; that stretch reads DKCKFLHQERMNQCESHLHWHTVAKESCGDRSMNLHDYGMLLPCGIDRFRGVKFVCCPA. Cu cation contacts are provided by histidine 148, histidine 152, and tyrosine 169. Composition is skewed to acidic residues over residues 193–207 and 242–262; these read EQETDSSEVEGEESD and GDGDEDEEDDEDVDPTDEQES. The interval 193–280 is disordered; the sequence is EQETDSSEVE…MTTTTTTTTE (88 aa). The BPTI/Kunitz inhibitor domain occupies 286–344; it reads VRAVCWAQAESGPCRAMLERWYFNPKKRRCVPFLFGGCGGNRNNFESEEYCLAVCSSSL. Cystine bridges form between cysteine 290/cysteine 340, cysteine 299/cysteine 323, and cysteine 315/cysteine 336. Residues 354 to 545 enclose the E2 domain; the sequence is AVDQYFEAPG…SEIQNQIYPA (192 aa). Asparagine 522 carries an N-linked (GlcNAc...) asparagine glycan. The chain crosses the membrane as a helical span at residues 669–689; that stretch reads IIGLMVGGVVIATVIVITLVM. Over 690–737 the chain is Cytoplasmic; that stretch reads LRKKQYTSIHHGVIEVDAAVTPEERHLARMQQNGYENPTYKFFEQMQN. Positions 724–729 match the YENPXY motif motif; sequence YENPTY. The tract at residues 726 to 729 is clathrin-binding; it reads NPTY.

This sequence belongs to the APP family.

The protein resides in the membrane. Functional neuronal receptor which couples to intracellular signaling pathway through the GTP-binding protein G(O). This is Amyloid-beta A4 protein (app) from Takifugu rubripes (Japanese pufferfish).